The following is an 882-amino-acid chain: DNA polymerase 1 (882 aa).

The segment at 1 to 31 (MTKQLTLFDIPSSKPAKSEQNTQQSQQSAPV) is disordered. Over residues 18–29 (SEQNTQQSQQSA) the composition is skewed to polar residues.

The protein belongs to the DNA polymerase type-B family. In terms of assembly, interacts with PCNA subunit PCNA2 and weakly with PCNA3.

It catalyses the reaction DNA(n) + a 2'-deoxyribonucleoside 5'-triphosphate = DNA(n+1) + diphosphate. With respect to regulation, DNA synthesis is stimulated by PCNA heterotrimers. This polymerase possesses two enzymatic activities: DNA synthesis (polymerase) and an exonucleolytic activity that degrades single-stranded DNA in the 3'- to 5'-direction. DNA polymerase I, DNA ligase and the flap endonuclease may be constitutively associated with the PCNA heterotrimer forming a scanning complex able to couple DNA synthesis and Okazaki fragment maturation. The protein is DNA polymerase 1 (dpo1) of Saccharolobus solfataricus (strain ATCC 35092 / DSM 1617 / JCM 11322 / P2) (Sulfolobus solfataricus).